Reading from the N-terminus, the 493-residue chain is Glutamyl-tRNA(Gln) amidotransferase subunit A (493 aa).

Catalysis depends on charge relay system residues Lys78 and Ser158. The Acyl-ester intermediate role is filled by Ser182.

Belongs to the amidase family. GatA subfamily. Heterotrimer of A, B and C subunits.

It carries out the reaction L-glutamyl-tRNA(Gln) + L-glutamine + ATP + H2O = L-glutaminyl-tRNA(Gln) + L-glutamate + ADP + phosphate + H(+). Its function is as follows. Allows the formation of correctly charged Gln-tRNA(Gln) through the transamidation of misacylated Glu-tRNA(Gln) in organisms which lack glutaminyl-tRNA synthetase. The reaction takes place in the presence of glutamine and ATP through an activated gamma-phospho-Glu-tRNA(Gln). This chain is Glutamyl-tRNA(Gln) amidotransferase subunit A, found in Methylorubrum extorquens (strain CM4 / NCIMB 13688) (Methylobacterium extorquens).